A 347-amino-acid polypeptide reads, in one-letter code: MTTPPITELTTRARDVFRLVVDAYLETGQPVGSRTLSKLATLNLSPASIRNVMQDLEEYGLLASPHTSAGRMPTEQGLRLFVDGMMQVAEPSAEDRAQIEASLSEGGPIESALAQATAALSGLSACAGLVLVPKHERVLKQVAFVPMSERQALVVLVAGDGTVENRIIDVPAGLDPSALVEAGNFISATLSGLTLTEAMARVRREIEAERIAIDRAAQDLVSRGLAIWSSDGADRPVLIVRGQANLLDDSAVGDLDRVRQLLDELETKQDIAQLLDSAREGSATRIFIGSENKLFSLSGSSVIAAPYRGADGRVVGVVGVIGPTRLNYARIVPMVDFTAQSLSRLIR.

The protein belongs to the HrcA family.

Functionally, negative regulator of class I heat shock genes (grpE-dnaK-dnaJ and groELS operons). Prevents heat-shock induction of these operons. This Sphingopyxis alaskensis (strain DSM 13593 / LMG 18877 / RB2256) (Sphingomonas alaskensis) protein is Heat-inducible transcription repressor HrcA.